A 995-amino-acid polypeptide reads, in one-letter code: Endo-beta-N-acetylglucosaminidase EndoS (995 aa).

A signal peptide spans 1 to 36; the sequence is MDKHLLVKRTLGCVCAATLMGAALATHHDSLNTVKA. Positions 112–432 constitute a GH18 domain; sequence SLYGGYFRTW…KDATDNIFHS (321 aa). A glycoprotein-binding residues include H151, W153, and R186. Residue E235 is the Proton donor of the active site. Residues D237, Q303, Y305, E349, E350, N356, and Y402 each coordinate a glycoprotein. 4 LRR repeats span residues 437–460, 478–503, 562–585, and 586–609; these read SKAL…DFPD, LERF…KFKK, LTGL…DAAT, and LTSL…ENRQ. Positions 765 to 923 are carbohydrate-binding module (CBM); the sequence is MVNLAEGATV…VPELQILGYP (159 aa). Ca(2+) is bound by residues K786, D789, Q791, P915, and E916. A three-helix bundle (3H) region spans residues 924 to 995; the sequence is LPNADTIMKT…CIEKRQLLKK (72 aa).

This sequence belongs to the glycosyl hydrolase 18 family. In terms of processing, cleaved by SpeB protease; leading to loss of endoglucosidase activity. EndoS is produced and secreted prior to SpeB, suggesting that it is degraded after acting as a host immune evasion factor.

It localises to the secreted. Its subcellular location is the host extracellular space. It carries out the reaction an N(4)-(oligosaccharide-(1-&gt;3)-[oligosaccharide-(1-&gt;6)]-beta-D-Man-(1-&gt;4)-beta-D-GlcNAc-(1-&gt;4)-alpha-D-GlcNAc)-L-asparaginyl-[protein] + H2O = an oligosaccharide-(1-&gt;3)-[oligosaccharide-(1-&gt;6)]-beta-D-Man-(1-&gt;4)-D-GlcNAc + N(4)-(N-acetyl-beta-D-glucosaminyl)-L-asparaginyl-[protein]. Endoglucosidase that acts as a host immune evasion factor by mediating hydrolysis of the N-linked glycan from the Fc region of host immunoglobulin-gamma (IgG) during infection. Specifically catalyzes the hydrolysis of the beta-1,4 linkage between the first two N-acetylglucosamine residues of the complex-type N-linked glycan located on 'Asn-297' of the Fc region of IgG antibodies (IGHG1, IGHG2, IGHG3 or IGHG4), thereby preventing interaction between IgGs and Fc receptors and ability to activate the complement pathway. Shows a specificity for biantennary complex type N-glycans; does neither cleave larger complex type glycans nor oligomannose and nor hybrid-type glycans. Specifically acts on IgGs; does not act on immunoglobulin alpha, beta, delta or mu. This Streptococcus pyogenes serotype M1 protein is Endo-beta-N-acetylglucosaminidase EndoS.